A 40-amino-acid polypeptide reads, in one-letter code: Photosystem II reaction center protein J (40 aa).

Residues 8-28 (IPLWIIGTVAGILVIGLIGIF) form a helical membrane-spanning segment.

Belongs to the PsbJ family. As to quaternary structure, PSII is composed of 1 copy each of membrane proteins PsbA, PsbB, PsbC, PsbD, PsbE, PsbF, PsbH, PsbI, PsbJ, PsbK, PsbL, PsbM, PsbT, PsbX, PsbY, PsbZ, Psb30/Ycf12, at least 3 peripheral proteins of the oxygen-evolving complex and a large number of cofactors. It forms dimeric complexes.

It localises to the plastid. The protein resides in the chloroplast thylakoid membrane. Functionally, one of the components of the core complex of photosystem II (PSII). PSII is a light-driven water:plastoquinone oxidoreductase that uses light energy to abstract electrons from H(2)O, generating O(2) and a proton gradient subsequently used for ATP formation. It consists of a core antenna complex that captures photons, and an electron transfer chain that converts photonic excitation into a charge separation. This is Photosystem II reaction center protein J from Oenothera elata subsp. hookeri (Hooker's evening primrose).